A 394-amino-acid chain; its full sequence is MSKEKFKRIKPHINVGTIGHVDHGKTTLTAAITTVLSKKYGGYARAFDQIDNAPEEKARGITINTSHVEYDTAYRHYAHVDCPGHADYIKNMITGAAQMDGAILVVAATDGPMPQTREHILLARQVGVPHIIVFMNKCDMVNDEELLELVEMEMRELLSQYDFPGDNTPIIRGSALKALENDEIWSNKILELSDALDNYIPEPKRVVDQPFLLPIEDVFSISGRGTVVTGRIERGVIRVGEEIEIVGIKDTIKTTCTGVEMFRKLLDEGRAGENVGVLLRGTKRDEVERGQVLSKPGYIKPHSHFESEVYILNKDEGGRHTPFFKGYRPQFYFRTTDITGTIELPEGADMVMPGDNIRMIVHLIAPIAMDDGLRFAIREGGRTIGAGIVSKIIS.

Positions 10-204 (KPHINVGTIG…ALDNYIPEPK (195 aa)) constitute a tr-type G domain. A G1 region spans residues 19–26 (GHVDHGKT). Residue 19 to 26 (GHVDHGKT) coordinates GTP. Mg(2+) is bound at residue Thr26. The segment at 60 to 64 (GITIN) is G2. Residues 81 to 84 (DCPG) form a G3 region. GTP is bound by residues 81–85 (DCPGH) and 136–139 (NKCD). The segment at 136–139 (NKCD) is G4. The segment at 174–176 (SAL) is G5.

The protein belongs to the TRAFAC class translation factor GTPase superfamily. Classic translation factor GTPase family. EF-Tu/EF-1A subfamily. In terms of assembly, monomer.

It is found in the cytoplasm. It carries out the reaction GTP + H2O = GDP + phosphate + H(+). GTP hydrolase that promotes the GTP-dependent binding of aminoacyl-tRNA to the A-site of ribosomes during protein biosynthesis. The sequence is that of Elongation factor Tu from Blochmanniella pennsylvanica (strain BPEN).